The following is a 496-amino-acid chain: Lysosomal Pro-X carboxypeptidase (496 aa).

The first 21 residues, 1 to 21 (MGRRALLLLLLSFLAPWATIA), serve as a signal peptide directing secretion. The propeptide occupies 22–45 (LRPALRALGSLHLPTNPTSLPAVA). N-linked (GlcNAc...) asparagine glycans are attached at residues N47 and N101. The Charge relay system role is filled by S179. The SKS domain stretch occupies residues 194-334 (HMVVGALAAS…QNIFQALNVY (141 aa)). Disulfide bonds link C215-C372, C233-C310, C264-C343, and C364-C394. Residues N317, N336, and N345 are each glycosylated (N-linked (GlcNAc...) asparagine). N-linked (GlcNAc...) asparagine glycosylation occurs at N415. Residues D430 and H455 each act as charge relay system in the active site.

It belongs to the peptidase S28 family. In terms of assembly, homodimer. As to expression, highest levels in placenta, lung and liver. Also present in heart, brain, pancreas and kidney.

Its subcellular location is the lysosome. It catalyses the reaction Cleavage of a -Pro-|-Xaa bond to release a C-terminal amino acid.. Its function is as follows. Cleaves C-terminal amino acids linked to proline in peptides such as angiotensin II, III and des-Arg9-bradykinin. This cleavage occurs at acidic pH, but enzymatic activity is retained with some substrates at neutral pH. This chain is Lysosomal Pro-X carboxypeptidase (PRCP), found in Homo sapiens (Human).